Consider the following 344-residue polypeptide: tRNA N6-adenosine threonylcarbamoyltransferase (344 aa).

Residues His115 and His119 each coordinate Fe cation. Substrate is bound by residues 137–141 (LVSGG), Asp170, Gly183, Asp187, and Asn276. Position 306 (Asp306) interacts with Fe cation.

Belongs to the KAE1 / TsaD family. Fe(2+) serves as cofactor.

Its subcellular location is the cytoplasm. It carries out the reaction L-threonylcarbamoyladenylate + adenosine(37) in tRNA = N(6)-L-threonylcarbamoyladenosine(37) in tRNA + AMP + H(+). Functionally, required for the formation of a threonylcarbamoyl group on adenosine at position 37 (t(6)A37) in tRNAs that read codons beginning with adenine. Is involved in the transfer of the threonylcarbamoyl moiety of threonylcarbamoyl-AMP (TC-AMP) to the N6 group of A37, together with TsaE and TsaB. TsaD likely plays a direct catalytic role in this reaction. The polypeptide is tRNA N6-adenosine threonylcarbamoyltransferase (Limosilactobacillus fermentum (strain NBRC 3956 / LMG 18251) (Lactobacillus fermentum)).